A 185-amino-acid chain; its full sequence is Tetratricopeptide repeat protein 36 homolog (185 aa).

TPR repeat units follow at residues 53–86 (SREL…AQRA), 88–119 (VLNN…ASDQ), and 125–158 (CHAH…GSKF).

The protein belongs to the TTC36 family.

The protein is Tetratricopeptide repeat protein 36 homolog of Drosophila pseudoobscura pseudoobscura (Fruit fly).